Here is a 236-residue protein sequence, read N- to C-terminus: Histone H1 (236 aa).

Residues 1-10 (MPPKKTETKA) show a composition bias toward basic and acidic residues. Disordered stretches follow at residues 1–36 (MPPK…SPST) and 94–236 (KGVF…AEKA). The segment covering 11 to 36 (ADASAAAAPAPAAAPTSAPKTKSPST) has biased composition (low complexity). In terms of domain architecture, H15 spans 36 to 111 (THASYLDMIT…GPSGGTKLAK (76 aa)). A compositionally biased stretch (basic residues) spans 109-122 (LAKKVAKPAPKKAA). Residues 123 to 150 (PKKETKEKKPAAAKKEGAAKKETKEKKA) show a composition bias toward basic and acidic residues. Residues 153-162 (AKKAAAPKKA) are compositionally biased toward low complexity. Positions 165–174 (PKKEVKEKKA) are enriched in basic and acidic residues. Positions 202–220 (AKSTAKPAAAKKAAAPKKA) are enriched in low complexity. Basic and acidic residues predominate over residues 224–236 (KKAEKAEPAAEKA).

This sequence belongs to the histone H1/H5 family.

The protein resides in the nucleus. The protein localises to the chromosome. Functionally, could act as an H1-type linker histone. This Neurospora crassa (strain ATCC 24698 / 74-OR23-1A / CBS 708.71 / DSM 1257 / FGSC 987) protein is Histone H1 (hH1).